A 353-amino-acid chain; its full sequence is Photosystem II protein D1 (353 aa).

Thr-2 carries the post-translational modification N-acetylthreonine. At Thr-2 the chain carries Phosphothreonine. 3 helical membrane-spanning segments follow: residues 29–46 (YIGW…TATS), 118–133 (HFLL…EWEL), and 142–156 (WIAV…AATA). His-118 is a binding site for chlorophyll a. Pheophytin a is bound at residue Tyr-126. [CaMn4O5] cluster is bound by residues Asp-170 and Glu-189. The chain crosses the membrane as a helical span at residues 197 to 218 (FHMLGVAGVFGGSLFSAMHGSL). His-198 contributes to the chlorophyll a binding site. Residues His-215 and 264–265 (SF) contribute to the a quinone site. His-215 is a Fe cation binding site. His-272 provides a ligand contact to Fe cation. A helical transmembrane segment spans residues 274–288 (FLAAWPVVGIWFTAL). Residues His-332, Glu-333, Asp-342, and Ala-344 each coordinate [CaMn4O5] cluster. The propeptide occupies 345–353 (ALEVPYLNG).

The protein belongs to the reaction center PufL/M/PsbA/D family. PSII is composed of 1 copy each of membrane proteins PsbA, PsbB, PsbC, PsbD, PsbE, PsbF, PsbH, PsbI, PsbJ, PsbK, PsbL, PsbM, PsbT, PsbX, PsbY, PsbZ, Psb30/Ycf12, at least 3 peripheral proteins of the oxygen-evolving complex and a large number of cofactors. It forms dimeric complexes. The D1/D2 heterodimer binds P680, chlorophylls that are the primary electron donor of PSII, and subsequent electron acceptors. It shares a non-heme iron and each subunit binds pheophytin, quinone, additional chlorophylls, carotenoids and lipids. D1 provides most of the ligands for the Mn4-Ca-O5 cluster of the oxygen-evolving complex (OEC). There is also a Cl(-1) ion associated with D1 and D2, which is required for oxygen evolution. The PSII complex binds additional chlorophylls, carotenoids and specific lipids. is required as a cofactor. In terms of processing, phosphorylated in both bundle sheath and mesophyll cells, phosphorylation increases when cells are grown under high rather than low light regimes (70 vs 900 umol photons/m-2/s). Post-translationally, PSII is subject to light-induced damage, in particular to D1. Damaged protein is degraded by Deg1 and FtsH proteases and replaced. In maize mesophyll cells D1 degradation is less extensive in grana (stacked) vs stroma (unstacked) lamellae, in part due to exclusion of FtsH from the grana. D1 degradation is faster in bundle sheath cells. Tyr-161 forms a radical intermediate that is referred to as redox-active TyrZ, YZ or Y-Z. In terms of processing, C-terminally processed by CTPA; processing is essential to allow assembly of the oxygen-evolving complex and thus photosynthetic growth.

The protein localises to the plastid. The protein resides in the chloroplast thylakoid membrane. The enzyme catalyses 2 a plastoquinone + 4 hnu + 2 H2O = 2 a plastoquinol + O2. Functionally, photosystem II (PSII) is a light-driven water:plastoquinone oxidoreductase that uses light energy to abstract electrons from H(2)O, generating O(2) and a proton gradient subsequently used for ATP formation. It consists of a core antenna complex that captures photons, and an electron transfer chain that converts photonic excitation into a charge separation. The D1/D2 (PsbA/PsbD) reaction center heterodimer binds P680, the primary electron donor of PSII as well as several subsequent electron acceptors. The polypeptide is Photosystem II protein D1 (Zea mays (Maize)).